The sequence spans 1613 residues: Reverse gyrase (1613 aa).

An RG N-terminal-type zinc finger spans residues 1–38 (MIPMIYKEMCPNCNGEITSERLAIGVCEKCLKEENVFE). Zn(2+) contacts are provided by Cys10, Cys13, Cys27, and Cys30. Residues Gln83 and 100–107 (VPTGVGKS) each bind ATP. The Helicase ATP-binding domain occupies 87–291 (AKRVLKNKSF…LYRELLDFEI (205 aa)). Residues 203 to 206 (DDVD) carry the DEAD box motif. The Helicase C-terminal domain maps to 310-525 (SKEKILEYIK…IDEVNLEELI (216 aa)). The segment at 546–1613 (DLLKSVLMVV…ALHEEILSIR (1068 aa)) is topoisomerase I. The region spanning 550–712 (SVLMVVESPN…NIYRVGFNEI (163 aa)) is the Toprim domain. Mg(2+) is bound by residues Glu556 and Asp681. In terms of domain architecture, Topo IA-type catalytic spans 733–1613 (DENKVKGQVV…ALHEEILSIR (881 aa)). Positions 1070–1199 (FAGLVLGDGS…IGIYLNSIGI (130 aa)) constitute a DOD-type homing endonuclease domain. Tyr1363 acts as the O-(5'-phospho-DNA)-tyrosine intermediate in catalysis.

It in the N-terminal section; belongs to the DEAD box helicase family. DDVD subfamily. The protein in the C-terminal section; belongs to the type IA topoisomerase family. Monomer. It depends on Zn(2+) as a cofactor. Requires Mg(2+) as cofactor. In terms of processing, this protein undergoes a protein self splicing that involves a post-translational excision of the intervening region (intein) followed by peptide ligation.

It is found in the cytoplasm. The enzyme catalyses ATP + H2O = ADP + phosphate + H(+). Modifies the topological state of DNA by introducing positive supercoils in an ATP-dependent process, increasing the linking number in steps of +1. Binds to single-stranded DNA, transiently cleaves and then rejoins the ends, introducing a positive supercoil in the process. The scissile phosphodiester is attacked by the catalytic tyrosine of the enzyme, resulting in the formation of a DNA-(5'-phosphotyrosyl)-enzyme intermediate. Probably involved in rewinding DNA strands in regions of the chromosome that have opened up to allow replication, transcription, DNA repair and/or for DNA protection. This chain is Reverse gyrase, found in Methanocaldococcus jannaschii (strain ATCC 43067 / DSM 2661 / JAL-1 / JCM 10045 / NBRC 100440) (Methanococcus jannaschii).